Here is a 471-residue protein sequence, read N- to C-terminus: Thymidine phosphorylase (471 aa).

Pro residues predominate over residues 1-10; it reads MAAPGTPPPS. Positions 1–21 are disordered; sequence MAAPGTPPPSASGGGGGEPRQ. Position 6 is a phosphothreonine (Thr6). His102, Arg188, Ser203, and Lys207 together coordinate substrate.

The protein belongs to the thymidine/pyrimidine-nucleoside phosphorylase family. In terms of assembly, homodimer.

It carries out the reaction thymidine + phosphate = 2-deoxy-alpha-D-ribose 1-phosphate + thymine. The protein operates within pyrimidine metabolism; dTMP biosynthesis via salvage pathway; dTMP from thymine: step 1/2. Its function is as follows. Catalyzes the reversible phosphorolysis of thymidine. The produced molecules are then utilized as carbon and energy sources or in the rescue of pyrimidine bases for nucleotide synthesis. This Mus musculus (Mouse) protein is Thymidine phosphorylase (Tymp).